We begin with the raw amino-acid sequence, 434 residues long: D-inositol 3-phosphate glycosyltransferase (434 aa).

Residue histidine 26 participates in 1D-myo-inositol 3-phosphate binding. UDP-N-acetyl-alpha-D-glucosamine contacts are provided by residues 32 to 33 (QP) and glycine 40. 1D-myo-inositol 3-phosphate-binding positions include 37–42 (DAGGMN), lysine 95, tyrosine 128, threonine 152, and arginine 172. Residues arginine 246 and lysine 251 each coordinate UDP-N-acetyl-alpha-D-glucosamine. Mg(2+) contacts are provided by tyrosine 321, arginine 322, and alanine 324. 2 residues coordinate UDP-N-acetyl-alpha-D-glucosamine: glutamate 334 and glutamate 342. A Mg(2+)-binding site is contributed by threonine 348.

This sequence belongs to the glycosyltransferase group 1 family. MshA subfamily. In terms of assembly, homodimer.

It catalyses the reaction 1D-myo-inositol 3-phosphate + UDP-N-acetyl-alpha-D-glucosamine = 1D-myo-inositol 2-acetamido-2-deoxy-alpha-D-glucopyranoside 3-phosphate + UDP + H(+). Functionally, catalyzes the transfer of a N-acetyl-glucosamine moiety to 1D-myo-inositol 3-phosphate to produce 1D-myo-inositol 2-acetamido-2-deoxy-glucopyranoside 3-phosphate in the mycothiol biosynthesis pathway. The polypeptide is D-inositol 3-phosphate glycosyltransferase (Thermobifida fusca (strain YX)).